The sequence spans 296 residues: Enoyl-CoA hydratase domain-containing protein 2, mitochondrial (296 aa).

Residues 1–17 constitute a mitochondrion transit peptide; it reads MLRVLPRALRLPCSWRF. Residue Lys-101 is modified to N6-acetyllysine; alternate. Lys-101 bears the N6-succinyllysine; alternate mark.

This sequence belongs to the enoyl-CoA hydratase/isomerase family.

The protein resides in the mitochondrion. The sequence is that of Enoyl-CoA hydratase domain-containing protein 2, mitochondrial (Echdc2) from Mus musculus (Mouse).